The sequence spans 835 residues: Protein translocase subunit SecA 1 (835 aa).

ATP-binding positions include glutamine 85, 103–107 (GEGKT), and aspartate 492. The interval 788–807 (VQGEAVHPSSDGEEAKKKPV) is disordered. Zn(2+)-binding residues include cysteine 819, cysteine 821, cysteine 830, and cysteine 831.

The protein belongs to the SecA family. As to quaternary structure, monomer and homodimer. Part of the essential Sec protein translocation apparatus which comprises SecA, SecYEG and auxiliary proteins SecDF. Other proteins may also be involved. Zn(2+) serves as cofactor.

Its subcellular location is the cell membrane. The protein resides in the cytoplasm. It catalyses the reaction ATP + H2O + cellular proteinSide 1 = ADP + phosphate + cellular proteinSide 2.. Its function is as follows. Part of the Sec protein translocase complex. Interacts with the SecYEG preprotein conducting channel. Has a central role in coupling the hydrolysis of ATP to the transfer of proteins into and across the cell membrane, serving as an ATP-driven molecular motor driving the stepwise translocation of polypeptide chains across the membrane. This Bacillus thuringiensis subsp. konkukian (strain 97-27) protein is Protein translocase subunit SecA 1.